A 367-amino-acid chain; its full sequence is Gibberellin 20 oxidase 3 (367 aa).

The Fe2OG dioxygenase domain maps to 198–304 (DGDPVMRLNH…RRSLTFFLNP (107 aa)). 2-oxoglutarate is bound at residue Tyr-208. Residues His-223, Asp-225, and His-285 each contribute to the Fe cation site. Residues Arg-295 and Ser-297 each coordinate 2-oxoglutarate.

The protein belongs to the iron/ascorbate-dependent oxidoreductase family. Fe(2+) is required as a cofactor. L-ascorbate serves as cofactor.

The catalysed reaction is gibberellin A12 + 2 2-oxoglutarate + 3 O2 + H(+) = gibberellin A9 + 2 succinate + 3 CO2 + 2 H2O. It carries out the reaction gibberellin A53 + 2 2-oxoglutarate + 3 O2 + H(+) = gibberellin A20 + 2 succinate + 3 CO2 + 2 H2O. Functionally, key oxidase enzyme in the biosynthesis of gibberellin. Catalyzes the formation of bioactive gibberellins (GAs) via a three-step oxidation at C-20 of the GA skeleton. Controls the elongation of the vegetative shoot and plant height by the regulation of active gibberellin levels. The chain is Gibberellin 20 oxidase 3 from Oryza sativa subsp. japonica (Rice).